Reading from the N-terminus, the 1849-residue chain is Breast cancer type 1 susceptibility protein homolog (1849 aa).

An N-acetylmethionine modification is found at Met1. The segment at 24–65 adopts an RING-type zinc-finger fold; the sequence is CPICLELIKEPVSTKCDHIFCKFCMLKLLNQKKGPSQCPLCK. Ser114 is subject to Phosphoserine. Residues Lys301 and Lys339 each participate in a glycyl lysine isopeptide (Lys-Gly) (interchain with G-Cter in SUMO2) cross-link. Phosphoserine is present on residues Ser395, Ser398, Ser423, and Ser434. Glycyl lysine isopeptide (Lys-Gly) (interchain with G-Cter in SUMO2) cross-links involve residues Lys457 and Lys517. Residues 530–542 are compositionally biased toward basic and acidic residues; sequence KMTEGTDQTEQKC. 2 disordered regions span residues 530-558 and 620-662; these read KMTE…KTKR and ELEL…RQSQ. Residues Ser691, Ser711, and Ser720 each carry the phosphoserine modification. Residues 882 to 912 are disordered; that stretch reads SGSLRDQSPRDPLKCRQKEDSQGKSESKSQH. Basic and acidic residues predominate over residues 888–910; that stretch reads QSPRDPLKCRQKEDSQGKSESKS. Lys981 participates in a covalent cross-link: Glycyl lysine isopeptide (Lys-Gly) (interchain with G-Cter in SUMO2). Position 982 is a phosphoserine; by CHEK2 (Ser982). Ser1002 bears the Phosphoserine mark. The segment covering 1036 to 1061 has biased composition (low complexity); it reads NSVNEVGSSTNEVGSSVNEVGSSGEN. The interval 1036–1070 is disordered; sequence NSVNEVGSSTNEVGSSVNEVGSSGENIQAEPGRNR. Lys1073 is covalently cross-linked (Glycyl lysine isopeptide (Lys-Gly) (interchain with G-Cter in SUMO2)). Phosphoserine occurs at positions 1138, 1184, 1211, 1212, 1274, 1323, 1330, 1336, and 1382. The segment at 1172–1211 is disordered; sequence FSESVQKGEFRGSPGPFTHTHLAQGHQRGAGKLESEETVS. 3 disordered regions span residues 1321–1389, 1412–1433, and 1452–1493; these read YQSE…ILTT, VLER…DSRG, and SEKS…RSSA. The segment covering 1336–1360 has biased composition (acidic residues); the sequence is SDDEERETGLEEDSCQEEQSVDSDL. Composition is skewed to polar residues over residues 1370–1389 and 1418–1429; these read ETSL…ILTT and SQPSHSSASLTA. Thr1389 is subject to Phosphothreonine. Residues 1392–1419 are interaction with PALB2; that stretch reads RDTMQDNLLKLQQEMAELEAVLERHGSQ. Phosphoserine is present on residues Ser1418, Ser1452, and Ser1518. Disordered regions lie at residues 1562-1590 and 1621-1640; these read SLFS…PPSA and REES…ERSK. Composition is skewed to basic and acidic residues over residues 1566–1582 and 1621–1631; these read HEPE…EPAH and REESMSKEKPE. 2 consecutive BRCT domains span residues 1642-1729 and 1749-1848; these read RLSM…DFEV and RDKK…TYLV.

Heterodimer with BARD1. Part of the BRCA1-associated genome surveillance complex (BASC), which contains BRCA1, MSH2, MSH6, MLH1, ATM, BLM, PMS2 and the MRE11-RAD50-NBN protein (MRN) complex. This association could be a dynamic process changing throughout the cell cycle and within subnuclear domains. Component of the BRCA1-A complex, at least composed of BRCA1, BARD1, UIMC1/RAP80, ABRAXAS1, BRCC3/BRCC36, BABAM2 and BABAM1/NBA1. Interacts (via the BRCT domains) with ABRAXAS1 (phosphorylated form); this is important for recruitment to sites of DNA damage. Can form a heterotetramer with two molecules of ABRAXAS1 (phosphorylated form). Component of the BRCA1-RBBP8 complex. Interacts (via the BRCT domains) with RBBP8 ('Ser-327' phosphorylated form); the interaction ubiquitinates RBBP8, regulates CHEK1 activation, and involves RBBP8 in BRCA1-dependent G2/M checkpoint control on DNA damage. Associates with RNA polymerase II holoenzyme. Interacts with SMC1A, NELFB, DCLRE1C, CLSPN. CHEK1, CHEK2, BAP1, BRCC3, UBXN1 and PCLAF. Interacts (via BRCT domains) with BRIP1 (phosphorylated form). Interacts with FANCD2 (ubiquitinated form). Interacts with H2AX (phosphorylated on 'Ser-140'). Interacts (via the BRCT domains) with ACACA (phosphorylated form); the interaction prevents dephosphorylation of ACACA. Part of a BRCA complex containing BRCA1, BRCA2 and PALB2. Interacts directly with PALB2; the interaction is essential for its function in HRR. Interacts directly with BRCA2; the interaction occurs only in the presence of PALB2 which serves as the bridging protein. Interacts (via the BRCT domains) with LMO4; the interaction represses the transcriptional activity of BRCA1. Interacts (via the BRCT domains) with CCAR2 (via N-terminus); the interaction represses the transcriptional activator activity of BRCA1. Interacts with EXD2. Interacts (via C-terminus) with DHX9; this interaction is direct and links BRCA1 to the RNA polymerase II holoenzyme. Interacts with DNA helicase ZGRF1; the interaction is increased following DNA damage induction. In terms of processing, phosphorylated in response to IR, UV, and various stimuli that cause checkpoint activation, probably by ATM or ATR. Phosphorylation at Ser-982 by CHEK2 regulates mitotic spindle assembly. Phosphorylation by AURKA regulates centrosomal microtubule nucleation. Autoubiquitinated, undergoes 'Lys-6'-linked polyubiquitination. 'Lys-6'-linked polyubiquitination does not promote degradation.

It is found in the nucleus. Its subcellular location is the chromosome. The protein resides in the cytoplasm. The enzyme catalyses S-ubiquitinyl-[E2 ubiquitin-conjugating enzyme]-L-cysteine + [acceptor protein]-L-lysine = [E2 ubiquitin-conjugating enzyme]-L-cysteine + N(6)-ubiquitinyl-[acceptor protein]-L-lysine.. The protein operates within protein modification; protein ubiquitination. In terms of biological role, E3 ubiquitin-protein ligase that specifically mediates the formation of 'Lys-6'-linked polyubiquitin chains and plays a central role in DNA repair by facilitating cellular responses to DNA damage. It is unclear whether it also mediates the formation of other types of polyubiquitin chains. The BRCA1-BARD1 heterodimer coordinates a diverse range of cellular pathways such as DNA damage repair, ubiquitination and transcriptional regulation to maintain genomic stability. Regulates centrosomal microtubule nucleation. Required for appropriate cell cycle arrests after ionizing irradiation in both the S-phase and the G2 phase of the cell cycle. Required for FANCD2 targeting to sites of DNA damage. Inhibits lipid synthesis by binding to inactive phosphorylated ACACA and preventing its dephosphorylation. Contributes to homologous recombination repair (HRR) via its direct interaction with PALB2, fine-tunes recombinational repair partly through its modulatory role in the PALB2-dependent loading of BRCA2-RAD51 repair machinery at DNA breaks. Component of the BRCA1-RBBP8 complex which regulates CHEK1 activation and controls cell cycle G2/M checkpoints on DNA damage via BRCA1-mediated ubiquitination of RBBP8. Acts as a transcriptional activator. This is Breast cancer type 1 susceptibility protein homolog (BRCA1) from Bos taurus (Bovine).